A 137-amino-acid chain; its full sequence is Large ribosomal subunit protein uL16 (137 aa).

Belongs to the universal ribosomal protein uL16 family. In terms of assembly, part of the 50S ribosomal subunit.

Its function is as follows. Binds 23S rRNA and is also seen to make contacts with the A and possibly P site tRNAs. In Maricaulis maris (strain MCS10) (Caulobacter maris), this protein is Large ribosomal subunit protein uL16.